Consider the following 147-residue polypeptide: Elongation factor Tu (147 aa).

The protein belongs to the GTP-binding elongation factor family. EF-Tu/EF-1A subfamily. Monomer.

It is found in the cytoplasm. Its function is as follows. This protein promotes the GTP-dependent binding of aminoacyl-tRNA to the A-site of ribosomes during protein biosynthesis. This is Elongation factor Tu (tuf) from Fructilactobacillus sanfranciscensis (Lactobacillus sanfranciscensis).